The following is a 512-amino-acid chain: Zinc metalloprotease mde10 (512 aa).

The N-terminal stretch at Met1–Ser15 is a signal peptide. N-linked (GlcNAc...) asparagine glycosylation is present at Asn35. In terms of domain architecture, Peptidase M12B spans Gln65–Lys306. His229 is a binding site for Zn(2+). Residue Glu230 is part of the active site. Residues His233 and His239 each contribute to the Zn(2+) site. Disulfide bonds link Cys246/Cys254 and Cys374/Cys394. The region spanning Leu315–Asp402 is the Disintegrin domain. Asn432 is a glycosylation site (N-linked (GlcNAc...) asparagine).

Zn(2+) is required as a cofactor. Post-translationally, glycosylated.

The protein resides in the endoplasmic reticulum. The protein localises to the spore wall. Its function is as follows. Has a role in the development of the spore envelope. In Schizosaccharomyces pombe (strain 972 / ATCC 24843) (Fission yeast), this protein is Zinc metalloprotease mde10 (mde10).